The following is a 134-amino-acid chain: Holo-[acyl-carrier-protein] synthase (134 aa).

The Mg(2+) site is built by D8 and E56.

Belongs to the P-Pant transferase superfamily. AcpS family. Requires Mg(2+) as cofactor.

It is found in the cytoplasm. The enzyme catalyses apo-[ACP] + CoA = holo-[ACP] + adenosine 3',5'-bisphosphate + H(+). Functionally, transfers the 4'-phosphopantetheine moiety from coenzyme A to a Ser of acyl-carrier-protein. The polypeptide is Holo-[acyl-carrier-protein] synthase (Clostridium kluyveri (strain ATCC 8527 / DSM 555 / NBRC 12016 / NCIMB 10680 / K1)).